A 231-amino-acid chain; its full sequence is Ribose-5-phosphate isomerase A (231 aa).

Residues 28-31 (TGST), 83-86 (DGAD), and 96-99 (KGGG) contribute to the substrate site. The Proton acceptor role is filled by E105. K123 provides a ligand contact to substrate.

It belongs to the ribose 5-phosphate isomerase family. Homodimer.

The enzyme catalyses aldehydo-D-ribose 5-phosphate = D-ribulose 5-phosphate. The protein operates within carbohydrate degradation; pentose phosphate pathway; D-ribose 5-phosphate from D-ribulose 5-phosphate (non-oxidative stage): step 1/1. In terms of biological role, catalyzes the reversible conversion of ribose-5-phosphate to ribulose 5-phosphate. The chain is Ribose-5-phosphate isomerase A from Sinorhizobium fredii (strain NBRC 101917 / NGR234).